We begin with the raw amino-acid sequence, 436 residues long: Protein 60A (436 aa).

Positions 1–27 are cleaved as a signal peptide; sequence MTASLVVLPSLWLILIIFTAPYTHCTQ. A propeptide spanning residues 28–317 is cleaved from the precursor; the sequence is SGIYIDNGKD…STLHQRKKSK (290 aa). N-linked (GlcNAc...) asparagine glycans are attached at residues Asn102, Asn114, Asn217, and Asn229. Positions 293 to 322 are disordered; sequence IKSTSGHSTQKRTKRSTLHQRKKSKSEPVN. Residues 301–316 show a composition bias toward basic residues; sequence TQKRTKRSTLHQRKKS. Cystine bridges form between Cys335/Cys401, Cys364/Cys433, and Cys368/Cys435. N-linked (GlcNAc...) asparagine glycosylation is present at Asn377.

Belongs to the TGF-beta family. Homodimer; disulfide-linked.

It is found in the secreted. The protein is Protein 60A (gbb) of Drosophila virilis (Fruit fly).